The chain runs to 1033 residues: Potassium-transporting ATPase alpha chain 1 (1033 aa).

Residues 1-96 are Cytoplasmic-facing; that stretch reads MGKENYELYS…NALRPPRGTP (96 aa). A phosphotyrosine mark is found at Tyr6 and Tyr9. Residues 14 to 39 form a disordered region; the sequence is GTGPGGDMAAKMSKKKAGGGGGKKKE. Positions 25 to 38 are enriched in basic residues; it reads MSKKKAGGGGGKKK. At Ser26 the chain carries Phosphoserine. The helical transmembrane segment at 97 to 117 threads the bilayer; that stretch reads EYVKFARQLAGGLQCLMWVAA. At 118 to 140 the chain is on the lumenal side; sequence AICLIAFAIQASEGDLTTDDNLY. Residues 141-161 traverse the membrane as a helical segment; it reads LALALIAVVVVTGCFGYYQEF. Residues 162–297 are Cytoplasmic-facing; sequence KSTNIIASFK…NEKTPIAIEI (136 aa). The helical transmembrane segment at 298–317 threads the bilayer; that stretch reads EHFVDIIAGLAILFGATFFV. The Lumenal portion of the chain corresponds to 318 to 329; the sequence is VAMCIGYTFLRA. A helical transmembrane segment spans residues 330–347; it reads MVFFMAIVVAYVPEGLLA. The K(+) site is built by Val338, Ala339, Val341, and Glu343. Topologically, residues 348–781 are cytoplasmic; it reads TVTVCLSLTA…EQGRLIFDNL (434 aa). Residue Asp385 is the 4-aspartylphosphate intermediate of the active site. Mg(2+) contacts are provided by Asp385 and Thr387. A phosphoserine mark is found at Ser461 and Ser599. Mg(2+)-binding residues include Asp726 and Asp730. A helical membrane pass occupies residues 782-801; it reads KKSIAYTLTKNIPELTPYLI. Glu795 serves as a coordination point for K(+). At 802 to 811 the chain is on the lumenal side; the sequence is YITVSVPLPL. The helical transmembrane segment at 812-832 threads the bilayer; the sequence is GCITILFIELCTDIFPSVSLA. Glu820 is a K(+) binding site. The Cytoplasmic portion of the chain corresponds to 833–852; sequence YEKAESDIMHLRPRNPRRDR. Ser838 is subject to Phosphoserine. The helical transmembrane segment at 853–875 threads the bilayer; sequence LVNEPLAAYSYFQIGAIQSFAGF. At 876–927 the chain is on the lumenal side; it reads ADYFTAMAQEGWFPLLCVGLRPQWEDHHLQDLQDSYGQEWTFGQRLYQQYTC. Residues 928-947 traverse the membrane as a helical segment; it reads YTVFFISIEMCQIADVLIRK. Residues 948–961 are Cytoplasmic-facing; sequence TRRLSAFQQGFFRN. Ser952 carries the post-translational modification Phosphoserine; by PKA. The chain crosses the membrane as a helical span at residues 962 to 980; sequence RILVIAIVFQVCIGCFLCY. At 981 to 995 the chain is on the lumenal side; sequence CPGMPNIFNFMPIRF. The helical transmembrane segment at 996 to 1016 threads the bilayer; that stretch reads QWWLVPMPFGLLIFVYDEIRK. Topologically, residues 1017 to 1033 are cytoplasmic; it reads LGVRCCPGSWWDQELYY.

This sequence belongs to the cation transport ATPase (P-type) (TC 3.A.3) family. Type IIC subfamily. As to quaternary structure, the gastric H(+)/K(+) ATPase pump is composed of the catalytic alpha subunit ATP4A and the regulatory beta subunit ATP4B. Interacts (via the P-domain) with ATP4B (via N-terminus); this interaction stabilizes the lumenal-open E2 conformation state and prevents the reverse reaction of the transport cycle.

The protein localises to the apical cell membrane. It catalyses the reaction K(+)(out) + ATP + H2O + H(+)(in) = K(+)(in) + ADP + phosphate + 2 H(+)(out). Functionally, the catalytic subunit of the gastric H(+)/K(+) ATPase pump which transports H(+) ions in exchange for K(+) ions across the apical membrane of parietal cells. Uses ATP as an energy source to pump H(+) ions to the gastric lumen while transporting K(+) ion from the lumen into the cell. Remarkably generates a million-fold proton gradient across the gastric parietal cell membrane, acidifying the gastric juice down to pH 1. Within a transport cycle, the transfer of a H(+) ion across the membrane is coupled to ATP hydrolysis and is associated with a transient phosphorylation that shifts the pump conformation from inward-facing (E1) to outward-facing state (E2). The release of the H(+) ion in the stomach lumen is followed by binding of K(+) ion converting the pump conformation back to the E1 state. This chain is Potassium-transporting ATPase alpha chain 1 (Atp4a), found in Rattus norvegicus (Rat).